The following is a 280-amino-acid chain: Para-Rep C2 (280 aa).

The CRESS-DNA virus Rep endonuclease domain occupies 1-97 (MARRYCFTLN…ETLISEIGIP (97 aa)). An RCR-1 motif is present at residues 6 to 9 (CFTL). Residues glutamate 37 and histidine 45 each coordinate a divalent metal cation. The RCR-2 motif lies at 45–47 (HLQ). Positions 54–75 (NKIRLGGLKKKFGNRAHWEIAR) match the Nuclear localization signal motif. Residue tyrosine 84 is the For DNA cleavage activity of the active site. The short motif at 84–87 (YCCK) is the RCR-3 element. The short motif at 97 to 103 (PVMKGSN) is the Nuclear localization signal element. 172–180 (GSDGGEGKT) contributes to the ATP binding site.

This sequence belongs to the nanoviridea/circoviridae replication-associated protein family. Homooligomer (Potential). Rep binds to repeated DNA motifs (iterons). Requires Mg(2+) as cofactor. The cofactor is Mn(2+).

It is found in the host nucleus. The catalysed reaction is ATP + H2O = ADP + phosphate + H(+). Its function is as follows. Initiates and terminates the replication only of its own subviral DNA molecule. The closed circular ssDNA genome is first converted to a superhelical dsDNA. Rep binds a specific hairpin at the genome origin of replication. Introduces an endonucleolytic nick within the intergenic region of the genome, thereby initiating the rolling circle replication (RCR). Following cleavage, binds covalently to the 5'-phosphate of DNA as a tyrosyl ester. The cleavage gives rise to a free 3'-OH that serves as a primer for the cellular DNA polymerase. The polymerase synthesizes the (+) strand DNA by rolling circle mechanism. After one round of replication, a Rep-catalyzed nucleotidyl transfer reaction releases a circular single-stranded virus genome, thereby terminating the replication. Displays origin-specific DNA cleavage, nucleotidyl transferase, ATPase and helicase activities. This is Para-Rep C2 (C2) from Subterranean clover stunt C2 alphasatellite (SCSC2A).